We begin with the raw amino-acid sequence, 488 residues long: Kynurenine 3-monooxygenase 2 (488 aa).

It belongs to the aromatic-ring hydroxylase family. KMO subfamily. Requires FAD as cofactor.

The protein resides in the mitochondrion outer membrane. It carries out the reaction L-kynurenine + NADPH + O2 + H(+) = 3-hydroxy-L-kynurenine + NADP(+) + H2O. The protein operates within cofactor biosynthesis; NAD(+) biosynthesis; quinolinate from L-kynurenine: step 1/3. Catalyzes the hydroxylation of L-kynurenine (L-Kyn) to form 3-hydroxy-L-kynurenine (L-3OHKyn). Required for synthesis of quinolinic acid. This Aspergillus niger (strain ATCC MYA-4892 / CBS 513.88 / FGSC A1513) protein is Kynurenine 3-monooxygenase 2 (bna4-2).